The primary structure comprises 312 residues: Malate dehydrogenase (312 aa).

Residues 12–17 (GAGFTG) and aspartate 36 contribute to the NAD(+) site. Arginine 87 and arginine 93 together coordinate substrate. NAD(+) contacts are provided by residues asparagine 100 and 123 to 125 (LTN). Asparagine 125 is a binding site for substrate. Serine 149 is subject to Phosphoserine. Arginine 156 is a binding site for substrate. The Proton acceptor role is filled by histidine 180.

Belongs to the LDH/MDH superfamily. MDH type 3 family.

The enzyme catalyses (S)-malate + NAD(+) = oxaloacetate + NADH + H(+). In terms of biological role, catalyzes the reversible oxidation of malate to oxaloacetate. The protein is Malate dehydrogenase of Bacillus mycoides (strain KBAB4) (Bacillus weihenstephanensis).